An 89-amino-acid chain; its full sequence is MTEAKKSLKRTLIGKVVSDKRAKTVTVLVERRVKHELYGKIVAKTSKYHAHDEKGEYKLGDTIEITESRPISKTKNWVVTRLVEKAVLV.

The protein belongs to the universal ribosomal protein uS17 family. Part of the 30S ribosomal subunit.

In terms of biological role, one of the primary rRNA binding proteins, it binds specifically to the 5'-end of 16S ribosomal RNA. In Variovorax paradoxus (strain S110), this protein is Small ribosomal subunit protein uS17.